The chain runs to 388 residues: Pectin acetylesterase 1 (388 aa).

The N-terminal stretch at 1-24 is a signal peptide; sequence MKTLLYWGWSSLAGLILFSILAHG. 2 N-linked (GlcNAc...) asparagine glycosylation sites follow: Asn30 and Asn33. Residues Ser187 and Asp283 each act as charge relay system in the active site. Residue Asn304 is glycosylated (N-linked (GlcNAc...) asparagine). His349 acts as the Charge relay system in catalysis.

This sequence belongs to the pectinacetylesterase family.

The protein localises to the secreted. Its subcellular location is the cell wall. In terms of biological role, hydrolyzes acetyl esters in homogalacturonan regions of pectin. In type I primary cell wall, galacturonic acid residues of pectin can be acetylated at the O-2 and O-3 positions. Decreasing the degree of acetylation of pectin gels in vitro alters their physical properties. This is Pectin acetylesterase 1 from Arabidopsis thaliana (Mouse-ear cress).